The sequence spans 431 residues: Probable zinc metalloprotease Lema_P086240 (431 aa).

Asn46 carries an N-linked (GlcNAc...) asparagine glycan. 3 residues coordinate Zn(2+): His117, Asp137, and Glu170. Asn185 is a glycosylation site (N-linked (GlcNAc...) asparagine). A Zn(2+)-binding site is contributed by Asp197. Residues Asn258, Asn310, Asn349, Asn359, and Asn369 are each glycosylated (N-linked (GlcNAc...) asparagine). One can recognise a Fibronectin type-III domain in the interval 344–431 (PGMPRNVTID…KSPAVYPFPG (88 aa)).

It belongs to the peptidase M28 family. M28B subfamily. Requires Zn(2+) as cofactor.

The protein resides in the secreted. This Leptosphaeria maculans (strain JN3 / isolate v23.1.3 / race Av1-4-5-6-7-8) (Blackleg fungus) protein is Probable zinc metalloprotease Lema_P086240.